The sequence spans 360 residues: DnaJ homolog subfamily C member 25 (360 aa).

The chain crosses the membrane as a helical span at residues 20-40; it reads WMLLAPLLPALLLVRPAGALV. One can recognise a J domain in the interval 49–124; that stretch reads DCYEVLGVSR…ETRKDYDYML (76 aa). The next 2 helical transmembrane spans lie at 150–170 and 244–264; these read VVILVSVCAISVFQFFSWWNS and LLLFQIILAPFHLCSYIVWYC.

It belongs to the DNAJC25 family.

It is found in the membrane. The polypeptide is DnaJ homolog subfamily C member 25 (DNAJC25) (Homo sapiens (Human)).